Consider the following 353-residue polypeptide: Photosystem II protein D1 (353 aa).

An N-acetylthreonine modification is found at Thr-2. At Thr-2 the chain carries Phosphothreonine. The next 3 helical transmembrane spans lie at 29-46 (YIGW…TATS), 118-133 (HFLL…EWEL), and 142-156 (WIAV…AATA). His-118 contributes to the chlorophyll a binding site. Tyr-126 serves as a coordination point for pheophytin a. Asp-170 and Glu-189 together coordinate [CaMn4O5] cluster. Residues 197–218 (FHMLGVAGVFGGSLFSAMHGSL) form a helical membrane-spanning segment. His-198 contacts chlorophyll a. Residues His-215 and 264 to 265 (SF) contribute to the a quinone site. A Fe cation-binding site is contributed by His-215. His-272 lines the Fe cation pocket. A helical transmembrane segment spans residues 274–288 (FLAAWPVVGIWFTAL). His-332, Glu-333, Asp-342, and Ala-344 together coordinate [CaMn4O5] cluster. Positions 345 to 353 (AVEAPAVNG) are excised as a propeptide.

It belongs to the reaction center PufL/M/PsbA/D family. As to quaternary structure, PSII is composed of 1 copy each of membrane proteins PsbA, PsbB, PsbC, PsbD, PsbE, PsbF, PsbH, PsbI, PsbJ, PsbK, PsbL, PsbM, PsbT, PsbX, PsbY, PsbZ, Psb30/Ycf12, at least 3 peripheral proteins of the oxygen-evolving complex and a large number of cofactors. It forms dimeric complexes. The D1/D2 heterodimer binds P680, chlorophylls that are the primary electron donor of PSII, and subsequent electron acceptors. It shares a non-heme iron and each subunit binds pheophytin, quinone, additional chlorophylls, carotenoids and lipids. D1 provides most of the ligands for the Mn4-Ca-O5 cluster of the oxygen-evolving complex (OEC). There is also a Cl(-1) ion associated with D1 and D2, which is required for oxygen evolution. The PSII complex binds additional chlorophylls, carotenoids and specific lipids. is required as a cofactor. Post-translationally, tyr-161 forms a radical intermediate that is referred to as redox-active TyrZ, YZ or Y-Z. C-terminally processed by CTPA; processing is essential to allow assembly of the oxygen-evolving complex and thus photosynthetic growth.

It is found in the plastid. The protein localises to the chloroplast thylakoid membrane. The enzyme catalyses 2 a plastoquinone + 4 hnu + 2 H2O = 2 a plastoquinol + O2. Its function is as follows. Photosystem II (PSII) is a light-driven water:plastoquinone oxidoreductase that uses light energy to abstract electrons from H(2)O, generating O(2) and a proton gradient subsequently used for ATP formation. It consists of a core antenna complex that captures photons, and an electron transfer chain that converts photonic excitation into a charge separation. The D1/D2 (PsbA/PsbD) reaction center heterodimer binds P680, the primary electron donor of PSII as well as several subsequent electron acceptors. The protein is Photosystem II protein D1 of Marchantia polymorpha (Common liverwort).